Reading from the N-terminus, the 449-residue chain is UDP-N-acetylmuramoylalanine--D-glutamate ligase (449 aa).

118–124 (GTNGKTT) is an ATP binding site.

The protein belongs to the MurCDEF family.

It localises to the cytoplasm. The catalysed reaction is UDP-N-acetyl-alpha-D-muramoyl-L-alanine + D-glutamate + ATP = UDP-N-acetyl-alpha-D-muramoyl-L-alanyl-D-glutamate + ADP + phosphate + H(+). It functions in the pathway cell wall biogenesis; peptidoglycan biosynthesis. In terms of biological role, cell wall formation. Catalyzes the addition of glutamate to the nucleotide precursor UDP-N-acetylmuramoyl-L-alanine (UMA). This is UDP-N-acetylmuramoylalanine--D-glutamate ligase from Staphylococcus aureus (strain MSSA476).